A 789-amino-acid chain; its full sequence is Homocitrate dehydratase, mitochondrial (789 aa).

Residues 1-14 (MLSSANRFYIKRHL) constitute a mitochondrion transit peptide. Substrate contacts are provided by residues Q96 and 189–191 (DSH). Residues C385, C448, and C451 each coordinate [4Fe-4S] cluster. Residues R476, R481, K610, and 672 to 673 (AR) contribute to the substrate site.

This sequence belongs to the aconitase/IPM isomerase family. It depends on [4Fe-4S] cluster as a cofactor.

The protein localises to the mitochondrion. It catalyses the reaction (2R)-homocitrate = cis-homoaconitate + H2O. The protein operates within amino-acid biosynthesis; L-lysine biosynthesis via AAA pathway; L-alpha-aminoadipate from 2-oxoglutarate: step 2/5. Catalyzes the reversible dehydration of (R)-homocitrate to cis-homoaconitate, a step in the alpha-aminoadipate pathway for lysine biosynthesis. The sequence is that of Homocitrate dehydratase, mitochondrial (ACO2) from Saccharomyces cerevisiae (strain ATCC 204508 / S288c) (Baker's yeast).